The following is a 97-amino-acid chain: Integration host factor subunit alpha (97 aa).

This sequence belongs to the bacterial histone-like protein family. Heterodimer of an alpha and a beta chain.

Its function is as follows. This protein is one of the two subunits of integration host factor, a specific DNA-binding protein that functions in genetic recombination as well as in transcriptional and translational control. The polypeptide is Integration host factor subunit alpha (Hydrogenovibrio crunogenus (strain DSM 25203 / XCL-2) (Thiomicrospira crunogena)).